The chain runs to 410 residues: Serine hydroxymethyltransferase (410 aa).

Residues leucine 119 and 123 to 125 each bind (6S)-5,6,7,8-tetrahydrofolate; that span reads GHL. An N6-(pyridoxal phosphate)lysine modification is found at lysine 228. 351 to 353 is a (6S)-5,6,7,8-tetrahydrofolate binding site; that stretch reads SPF.

This sequence belongs to the SHMT family. As to quaternary structure, homodimer. Requires pyridoxal 5'-phosphate as cofactor.

It localises to the cytoplasm. The enzyme catalyses (6R)-5,10-methylene-5,6,7,8-tetrahydrofolate + glycine + H2O = (6S)-5,6,7,8-tetrahydrofolate + L-serine. The protein operates within one-carbon metabolism; tetrahydrofolate interconversion. It functions in the pathway amino-acid biosynthesis; glycine biosynthesis; glycine from L-serine: step 1/1. Catalyzes the reversible interconversion of serine and glycine with tetrahydrofolate (THF) serving as the one-carbon carrier. This reaction serves as the major source of one-carbon groups required for the biosynthesis of purines, thymidylate, methionine, and other important biomolecules. Also exhibits THF-independent aldolase activity toward beta-hydroxyamino acids, producing glycine and aldehydes, via a retro-aldol mechanism. This is Serine hydroxymethyltransferase from Alkaliphilus oremlandii (strain OhILAs) (Clostridium oremlandii (strain OhILAs)).